We begin with the raw amino-acid sequence, 289 residues long: Esterase GA18864 (289 aa).

Over residues 1–19 (MTNNDAAVEAPSSSRASSS) the composition is skewed to low complexity. The tract at residues 1–24 (MTNNDAAVEAPSSSRASSSKQQPK) is disordered. Residues Ser133, Asp191, and His218 each act as charge relay system in the active site. Positions 253–289 (VSFIESGAEDNDDDGDANDAEVAAATAAAGSDLDDSD) are disordered. Positions 259 to 271 (GAEDNDDDGDAND) are enriched in acidic residues. Residues 272-283 (AEVAAATAAAGS) show a composition bias toward low complexity.

Belongs to the LovG family.

The protein is Esterase GA18864 of Drosophila pseudoobscura pseudoobscura (Fruit fly).